A 141-amino-acid chain; its full sequence is Hemoglobin subunit alpha (141 aa).

Residues 1 to 141 enclose the Globin domain; that stretch reads VLSGTDKSNI…VSTVLTSKYR (141 aa). Ser3 carries the phosphoserine modification. N6-succinyllysine is present on residues Lys7 and Lys11. N6-acetyllysine; alternate is present on Lys16. Lys16 carries the N6-succinyllysine; alternate modification. A Phosphotyrosine modification is found at Tyr24. At Ser35 the chain carries Phosphoserine. N6-succinyllysine is present on Lys40. Ser49 carries the phosphoserine modification. His58 serves as a coordination point for O2. His87 is a heme b binding site. At Ser102 the chain carries Phosphoserine. Residue Thr108 is modified to Phosphothreonine. Phosphoserine is present on Ser124. Phosphothreonine occurs at positions 134 and 137. Ser138 carries the post-translational modification Phosphoserine.

Belongs to the globin family. As to quaternary structure, heterotetramer of two alpha chains and two beta chains. In terms of tissue distribution, red blood cells.

Involved in oxygen transport from the lung to the various peripheral tissues. Functionally, hemopressin acts as an antagonist peptide of the cannabinoid receptor CNR1. Hemopressin-binding efficiently blocks cannabinoid receptor CNR1 and subsequent signaling. This Talpa europaea (European mole) protein is Hemoglobin subunit alpha (HBA).